Here is a 433-residue protein sequence, read N- to C-terminus: Oxaloacetate decarboxylase beta chain 2 (433 aa).

A run of 9 helical transmembrane segments spans residues 13 to 35 (LMHL…WLAI), 42 to 64 (LLLL…LALT), 125 to 147 (LFYK…VGAM), 160 to 182 (LLLG…TLNY), 214 to 236 (LAPE…VPLI), 266 to 288 (ILFP…PLLG), 308 to 327 (TVQN…SVGA), 339 to 361 (TLGI…VLMA), and 413 to 432 (VAGV…YVLA).

It belongs to the GcdB/MmdB/OadB family. As to quaternary structure, heterotrimer of an alpha, a beta and a gamma subunit. Na(+) serves as cofactor.

It localises to the cell membrane. The enzyme catalyses oxaloacetate + 2 Na(+)(in) + H(+) = pyruvate + 2 Na(+)(out) + CO2. Its function is as follows. Catalyzes the decarboxylation of oxaloacetate coupled to Na(+) translocation. This Salmonella typhimurium (strain LT2 / SGSC1412 / ATCC 700720) protein is Oxaloacetate decarboxylase beta chain 2 (oadB2).